The sequence spans 95 residues: Selenoprotein K (95 aa).

The chain crosses the membrane as a helical span at residues 20–42 (LSFITDFFWGIAEFVVLFFRTLL). A disordered region spans residues 47 to 95 (KKRRGYGSSSDSRYDDGRGPPGNPPRRRMGRINHLQGPNPPPMAGGUGR). Residue Sec-93 is a non-standard amino acid, selenocysteine.

It belongs to the selenoprotein K family. Interacts with DERL1, DERL2, DERL3 and SELENOS. The SELENOK-SELENOS complex interacts with VCP. Interacts with ZDHHC6. In terms of processing, cleaved by CAPN2/m-calpain in resting macrophages but not in activated macrophages. Macrophage activation up-regulates expression of the calpain inhibitor CAST/calpastatin, resulting in inhibition of CAPN2 activity. Post-translationally, truncated SELENOK proteins produced by failed UGA/Sec decoding are ubiquitinated by the CRL2(KLHDC2) complex, which recognizes the diglycine (Gly-Gly) at the C-terminus of truncated SELENOK proteins.

It is found in the endoplasmic reticulum membrane. The protein resides in the cell membrane. Its function is as follows. Required for Ca(2+) flux in immune cells and plays a role in T-cell proliferation and in T-cell and neutrophil migration. Involved in endoplasmic reticulum-associated degradation (ERAD) of soluble glycosylated proteins. Required for palmitoylation and cell surface expression of CD36 and involved in macrophage uptake of low-density lipoprotein and in foam cell formation. Together with ZDHHC6, required for palmitoylation of ITPR1 in immune cells, leading to regulate ITPR1 stability and function. Plays a role in protection of cells from ER stress-induced apoptosis. Protects cells from oxidative stress when overexpressed in cardiomyocytes. In Bos taurus (Bovine), this protein is Selenoprotein K.